We begin with the raw amino-acid sequence, 310 residues long: Beta-1,3-galactosyltransferase 5 (310 aa).

The Cytoplasmic portion of the chain corresponds to 1–7; the sequence is MAFPKMR. Residues 8 to 28 form a helical; Signal-anchor for type II membrane protein membrane-spanning segment; that stretch reads LMYICLLVLGALCLYFSMYSL. The Lumenal portion of the chain corresponds to 29–310; it reads NPFKEQSFVY…NSRGEDCPPV (282 aa). N-linked (GlcNAc...) asparagine glycosylation is found at Asn-130, Asn-174, and Asn-231.

The protein belongs to the glycosyltransferase 31 family. Expressed in stomach, jejunum, colon, pancreas, small intestine, testis and gastrointestinal and pancreatic cancer cell lines. Hardly detected in lung, liver, adrenal gland and peripheral blood leukocytes.

It is found in the golgi apparatus membrane. It carries out the reaction a globoside Gb4Cer (d18:1(4E)) + UDP-alpha-D-galactose = a globoside GalGb4Cer (d18:1(4E)) + UDP + H(+). Its pathway is protein modification; protein glycosylation. Functionally, catalyzes the transfer of Gal to GlcNAc-based acceptors with a preference for the core3 O-linked glycan GlcNAc(beta1,3)GalNAc structure. Can use glycolipid LC3Cer as an efficient acceptor. The protein is Beta-1,3-galactosyltransferase 5 of Homo sapiens (Human).